A 193-amino-acid chain; its full sequence is dTTP/UTP pyrophosphatase (193 aa).

Catalysis depends on D77, which acts as the Proton acceptor.

The protein belongs to the Maf family. YhdE subfamily. A divalent metal cation serves as cofactor.

It localises to the cytoplasm. The catalysed reaction is dTTP + H2O = dTMP + diphosphate + H(+). It carries out the reaction UTP + H2O = UMP + diphosphate + H(+). Functionally, nucleoside triphosphate pyrophosphatase that hydrolyzes dTTP and UTP. May have a dual role in cell division arrest and in preventing the incorporation of modified nucleotides into cellular nucleic acids. The sequence is that of dTTP/UTP pyrophosphatase from Bacteroides fragilis (strain YCH46).